The sequence spans 374 residues: ATPase ASNA1 homolog (374 aa).

Position 44–51 (44–51) interacts with ATP; sequence KGGVGKTT. The active site involves D73. ATP contacts are provided by E244 and N271.

It belongs to the arsA ATPase family. Homodimer.

It is found in the cytoplasm. The protein resides in the endoplasmic reticulum. Functionally, ATPase required for the post-translational delivery of tail-anchored (TA) proteins to the endoplasmic reticulum. Recognizes and selectively binds the transmembrane domain of TA proteins in the cytosol. This complex then targets to the endoplasmic reticulum by membrane-bound receptors, where the tail-anchored protein is released for insertion. This process is regulated by ATP binding and hydrolysis. ATP binding drives the homodimer towards the closed dimer state, facilitating recognition of newly synthesized TA membrane proteins. ATP hydrolysis is required for insertion. Subsequently, the homodimer reverts towards the open dimer state, lowering its affinity for the membrane-bound receptor, and returning it to the cytosol to initiate a new round of targeting. In Plasmodium vivax (strain Salvador I), this protein is ATPase ASNA1 homolog.